We begin with the raw amino-acid sequence, 360 residues long: DNA integrity scanning protein DisA (360 aa).

One can recognise a DAC domain in the interval 9–147 (DDEIIEVLRM…GSRKYILRET (139 aa)). Residues Gly-76, Leu-94, and 107 to 111 (TRHKT) each bind ATP.

Belongs to the DisA family. Homooctamer. Mg(2+) is required as a cofactor.

It carries out the reaction 2 ATP = 3',3'-c-di-AMP + 2 diphosphate. Participates in a DNA-damage check-point that is active prior to asymmetric division when DNA is damaged. DisA forms globular foci that rapidly scan along the chromosomes during sporulation, searching for lesions. When a lesion is present, DisA pauses at the lesion site. This triggers a cellular response that culminates in a temporary block in sporulation initiation. Its function is as follows. Also has diadenylate cyclase activity, catalyzing the condensation of 2 ATP molecules into cyclic di-AMP (c-di-AMP). c-di-AMP acts as a signaling molecule that couples DNA integrity with progression of sporulation. The rise in c-di-AMP level generated by DisA while scanning the chromosome, operates as a positive signal that advances sporulation; upon encountering a lesion, the DisA focus arrests at the damaged site and halts c-di-AMP synthesis. The protein is DNA integrity scanning protein DisA of Acetivibrio thermocellus (strain ATCC 27405 / DSM 1237 / JCM 9322 / NBRC 103400 / NCIMB 10682 / NRRL B-4536 / VPI 7372) (Clostridium thermocellum).